The sequence spans 228 residues: MIGIIGAMEEEVTILKNKLTQLSEISVAHVKFYTGILKDREVVITQSGIGKVNAAISTTLLINKFKPDIIINTGSAGALDESLNVGDVLISDDVKYHDADATAFGYEYGQIPQMPVAFQSSKPLIEKVSQVVQQQQLTAKVGLIVSGDSFIGSVEQRQKIKKAFPNAMAVEMEATAIAQTCYQFNVPFVVVRAVSDLANGEAEISFEAFLEKAAVSSSQTVEALVSQL.

Catalysis depends on glutamate 11, which acts as the Proton acceptor. Substrate is bound by residues glycine 77, isoleucine 151, and 172-173; that span reads ME. Catalysis depends on aspartate 196, which acts as the Proton donor.

This sequence belongs to the PNP/UDP phosphorylase family. MtnN subfamily.

The enzyme catalyses S-adenosyl-L-homocysteine + H2O = S-(5-deoxy-D-ribos-5-yl)-L-homocysteine + adenine. It carries out the reaction S-methyl-5'-thioadenosine + H2O = 5-(methylsulfanyl)-D-ribose + adenine. The catalysed reaction is 5'-deoxyadenosine + H2O = 5-deoxy-D-ribose + adenine. It functions in the pathway amino-acid biosynthesis; L-methionine biosynthesis via salvage pathway; S-methyl-5-thio-alpha-D-ribose 1-phosphate from S-methyl-5'-thioadenosine (hydrolase route): step 1/2. Catalyzes the irreversible cleavage of the glycosidic bond in both 5'-methylthioadenosine (MTA) and S-adenosylhomocysteine (SAH/AdoHcy) to adenine and the corresponding thioribose, 5'-methylthioribose and S-ribosylhomocysteine, respectively. Also cleaves 5'-deoxyadenosine, a toxic by-product of radical S-adenosylmethionine (SAM) enzymes, into 5-deoxyribose and adenine. In Staphylococcus aureus (strain bovine RF122 / ET3-1), this protein is 5'-methylthioadenosine/S-adenosylhomocysteine nucleosidase.